The chain runs to 385 residues: G2/mitotic-specific cyclin-B3 (385 aa).

Residues 1-16 are compositionally biased toward polar residues; it reads MMLRSQAKNVDLTSQA. Disordered regions lie at residues 1–48 and 63–88; these read MMLR…HSKG and SAKRDPLGKSRTSRRDVENLPPQKSR. Basic and acidic residues-rich tracts occupy residues 17–28 and 63–80; these read DSRHQQKRKQAE and SAKRDPLGKSRTSRRDVE.

Belongs to the cyclin family. Cyclin AB subfamily.

Its subcellular location is the nucleus. Functionally, could be involved at the G2/M (mitosis) transition. Interacts with the CDK1 and CDK2 protein kinases. G2/M cyclins accumulate steadily during G2 and are abruptly destroyed at mitosis. Plays a role during oocyte meiosis II. This is G2/mitotic-specific cyclin-B3 (cyb-3) from Caenorhabditis elegans.